Reading from the N-terminus, the 265-residue chain is Hydroxyethylthiazole kinase (265 aa).

Residue M50 participates in substrate binding. The ATP site is built by R125 and T171. G198 contacts substrate.

The protein belongs to the Thz kinase family. Requires Mg(2+) as cofactor.

The enzyme catalyses 5-(2-hydroxyethyl)-4-methylthiazole + ATP = 4-methyl-5-(2-phosphooxyethyl)-thiazole + ADP + H(+). The protein operates within cofactor biosynthesis; thiamine diphosphate biosynthesis; 4-methyl-5-(2-phosphoethyl)-thiazole from 5-(2-hydroxyethyl)-4-methylthiazole: step 1/1. Catalyzes the phosphorylation of the hydroxyl group of 4-methyl-5-beta-hydroxyethylthiazole (THZ). This chain is Hydroxyethylthiazole kinase, found in Salmonella schwarzengrund (strain CVM19633).